Consider the following 149-residue polypeptide: Calmodulin (149 aa).

A2 bears the N-acetylalanine mark. EF-hand domains lie at 8 to 43 (EQIA…LGQN), 44 to 79 (PTEA…KMKD), 81 to 116 (DSEE…LGEK), and 117 to 149 (LTDE…MTSK). Residues D21, D23, D25, T27, E32, D57, D59, D61, T63, E68, D94, D96, D98, and E105 each contribute to the Ca(2+) site. N6,N6,N6-trimethyllysine is present on K116. Ca(2+)-binding residues include D130, D132, D134, Q136, and E141.

It belongs to the calmodulin family.

Its function is as follows. Calmodulin mediates the control of a large number of enzymes, ion channels and other proteins by Ca(2+). Among the enzymes to be stimulated by the calmodulin-Ca(2+) complex are a number of protein kinases and phosphatases. In Renilla reniformis (Sea pansy), this protein is Calmodulin.